Consider the following 212-residue polypeptide: Large ribosomal subunit protein uL3 (212 aa).

The interval 136–155 (THGNSLSHRSNGSIGQNQTP) is disordered. Position 153 is an N5-methylglutamine (Q153).

This sequence belongs to the universal ribosomal protein uL3 family. Part of the 50S ribosomal subunit. Forms a cluster with proteins L14 and L19. Post-translationally, methylated by PrmB.

Functionally, one of the primary rRNA binding proteins, it binds directly near the 3'-end of the 23S rRNA, where it nucleates assembly of the 50S subunit. The sequence is that of Large ribosomal subunit protein uL3 from Shewanella baltica (strain OS223).